Here is a 20-residue protein sequence, read N- to C-terminus: Probable cinnamyl alcohol dehydrogenase 1 (20 aa).

It belongs to the zinc-containing alcohol dehydrogenase family. The cofactor is Zn(2+).

It catalyses the reaction (E)-cinnamyl alcohol + NADP(+) = (E)-cinnamaldehyde + NADPH + H(+). It carries out the reaction (E)-coniferol + NADP(+) = (E)-coniferaldehyde + NADPH + H(+). The catalysed reaction is (E)-sinapyl alcohol + NADP(+) = (E)-sinapaldehyde + NADPH + H(+). The enzyme catalyses (E)-4-coumaroyl alcohol + NADP(+) = (E)-4-coumaraldehyde + NADPH + H(+). It catalyses the reaction (E)-caffeyl alcohol + NADP(+) = (E)-caffeyl aldehyde + NADPH + H(+). The protein operates within aromatic compound metabolism; phenylpropanoid biosynthesis. Functionally, involved in lignin biosynthesis. Catalyzes the final step specific for the production of lignin monomers, like coniferyl alcohol, sinapyl alcohol and 4-coumaryl alcohol. This Pseudotsuga menziesii (Douglas-fir) protein is Probable cinnamyl alcohol dehydrogenase 1.